A 485-amino-acid polypeptide reads, in one-letter code: Cysteine--tRNA ligase (485 aa).

Cys27 is a binding site for Zn(2+). A 'HIGH' region motif is present at residues 29 to 39; that stretch reads ITAYDLCHIGH. 3 residues coordinate Zn(2+): Cys208, His233, and Glu237. The short motif at 265 to 269 is the 'KMSKS' region element; the sequence is KMSKS. Residue Lys268 coordinates ATP.

It belongs to the class-I aminoacyl-tRNA synthetase family. Monomer. It depends on Zn(2+) as a cofactor.

The protein localises to the cytoplasm. It catalyses the reaction tRNA(Cys) + L-cysteine + ATP = L-cysteinyl-tRNA(Cys) + AMP + diphosphate. The chain is Cysteine--tRNA ligase from Nitratidesulfovibrio vulgaris (strain DP4) (Desulfovibrio vulgaris).